The following is a 610-amino-acid chain: Glutamine--fructose-6-phosphate aminotransferase [isomerizing] (610 aa).

Cys-2 functions as the Nucleophile; for GATase activity in the catalytic mechanism. Residues 2-218 (CGIVGAVAQR…EGDVAEMTRR (217 aa)) enclose the Glutamine amidotransferase type-2 domain. 2 SIS domains span residues 286-426 (AAEI…QQQR) and 459-600 (LAED…VDQP). Lys-605 serves as the catalytic For Fru-6P isomerization activity.

As to quaternary structure, homodimer.

Its subcellular location is the cytoplasm. The enzyme catalyses D-fructose 6-phosphate + L-glutamine = D-glucosamine 6-phosphate + L-glutamate. Its function is as follows. Catalyzes the first step in hexosamine metabolism, converting fructose-6P into glucosamine-6P using glutamine as a nitrogen source. In Vibrio cholerae serotype O1 (strain ATCC 39315 / El Tor Inaba N16961), this protein is Glutamine--fructose-6-phosphate aminotransferase [isomerizing].